Reading from the N-terminus, the 750-residue chain is Dual specificity tyrosine-phosphorylation-regulated kinase 1A (750 aa).

Disordered stretches follow at residues 56–81 (ALPYNDQTPQPLPNQRRMPQTFRDPA) and 104–129 (YAKKKRRHQQGQGDDSSHKKERKVYN). The Bipartite nuclear localization signal motif lies at 109–126 (RRHQQGQGDDSSHKKERK). The Protein kinase domain maps to 151–471 (YEIDSLIGKG…PYYALQHSFF (321 aa)). ATP-binding positions include 157 to 165 (IGKGSFGQV), K180, and 230 to 233 (FEML). Residue D279 is the Proton acceptor of the active site. Disordered stretches follow at residues 400–434 (TKDGKKEYKPPGTRKLHNILGVENGGPGGRRAGES), 477–531 (EGTN…RHSG), 583–666 (SQKN…GNQA), and 731–750 (DREDSPMTGVCVQQSPVASS). Residues 477–493 (EGTNTSNSVSTSPAMEQ) are compositionally biased toward polar residues. Residues 494–517 (SQSSGTTSSTSSSSGGSSGTSNSG) are compositionally biased toward low complexity. The histidine-rich domain (HRD) stretch occupies residues 584-612 (QKNVPHHHGNGSHHHHHHHHHHHGQHILS). Positions 587–608 (VPHHHGNGSHHHHHHHHHHHGQ) are enriched in basic residues. A compositionally biased stretch (polar residues) spans 610-621 (ILSNRTRTRIYN). The span at 622–659 (SPSTSSSTQDSMDIGNSHHSMTSLSSSTTSSSTSSSST) shows a compositional bias: low complexity. Positions 741 to 750 (CVQQSPVASS) are enriched in polar residues.

This sequence belongs to the protein kinase superfamily. CMGC Ser/Thr protein kinase family. MNB/DYRK subfamily. In terms of processing, autophosphorylated on tyrosine residues.

The protein resides in the nucleus. The protein localises to the nucleus speckle. It carries out the reaction L-seryl-[protein] + ATP = O-phospho-L-seryl-[protein] + ADP + H(+). It catalyses the reaction L-threonyl-[protein] + ATP = O-phospho-L-threonyl-[protein] + ADP + H(+). The catalysed reaction is L-tyrosyl-[protein] + ATP = O-phospho-L-tyrosyl-[protein] + ADP + H(+). The enzyme catalyses [DNA-directed RNA polymerase] + ATP = phospho-[DNA-directed RNA polymerase] + ADP + H(+). Its function is as follows. Dual-specificity kinase which possesses both serine/threonine and tyrosine kinase activities. Exhibits a substrate preference for proline at position P+1 and arginine at position P-3. Plays an important role in double-strand breaks (DSBs) repair following DNA damage. Mechanistically, phosphorylates RNF169 and increases its ability to block accumulation of TP53BP1 at the DSB sites thereby promoting homologous recombination repair (HRR). Also acts as a positive regulator of transcription by acting as a CTD kinase that mediates phosphorylation of the CTD (C-terminal domain) of the large subunit of RNA polymerase II (RNAP II) POLR2A. Modulates alternative splicing by phosphorylating the splice factor SRSF6. Phosphorylates SEPTIN4, SEPTIN5 and SF3B1. This chain is Dual specificity tyrosine-phosphorylation-regulated kinase 1A, found in Xenopus laevis (African clawed frog).